Here is a 554-residue protein sequence, read N- to C-terminus: 3-(3-hydroxy-phenyl)propionate/3-hydroxycinnamic acid hydroxylase (554 aa).

Residues 17–46 (QVAI…VVEK) and 285–295 (FRIDRVLLAGD) each bind FAD.

It belongs to the PheA/TfdB FAD monooxygenase family. It depends on FAD as a cofactor.

It carries out the reaction 3-(3-hydroxyphenyl)propanoate + NADH + O2 + H(+) = 3-(2,3-dihydroxyphenyl)propanoate + NAD(+) + H2O. The enzyme catalyses (2E)-3-(3-hydroxyphenyl)prop-2-enoate + NADH + O2 + H(+) = (2E)-3-(2,3-dihydroxyphenyl)prop-2-enoate + NAD(+) + H2O. The protein operates within aromatic compound metabolism; 3-phenylpropanoate degradation. Its function is as follows. Catalyzes the insertion of one atom of molecular oxygen into position 2 of the phenyl ring of 3-(3-hydroxyphenyl)propionate (3-HPP) and hydroxycinnamic acid (3HCI). The protein is 3-(3-hydroxy-phenyl)propionate/3-hydroxycinnamic acid hydroxylase of Escherichia coli O81 (strain ED1a).